The primary structure comprises 631 residues: Poly(A)-specific ribonuclease PARN (631 aa).

The a divalent metal cation site is built by aspartate 28 and glutamate 30. A disordered region spans residues 147 to 173 (EDRRSQSNGASTMSYISPNSSKTPVSI). The segment covering 152-170 (QSNGASTMSYISPNSSKTP) has biased composition (polar residues). An R3H domain is found at 178 to 244 (KGFIDKVVER…ERYIVISKVD (67 aa)). Positions 291 and 381 each coordinate a divalent metal cation. Residues 568 to 631 (SPIQEEAASD…SVLFEVPDTW (64 aa)) are disordered.

Belongs to the CAF1 family. Component of a complex at least composed of cpeb1, cpsf1, papd4/gld2, pabpc1/ePAB, parn and sympk. It depends on a divalent metal cation as a cofactor. Post-translationally, a 62 kDa form, which is produced by proteolytic cleavage, also exists. In retina, it is constitutively present in most retinal cells, including the photoreceptors.

It is found in the cytoplasm. It localises to the nucleus. The enzyme catalyses Exonucleolytic cleavage of poly(A) to 5'-AMP.. Functionally, 3'-exoribonuclease that has a preference for poly(A) tails of mRNAs, thereby efficiently degrading poly(A) tails. Exonucleolytic degradation of the poly(A) tail is often the first step in the decay of eukaryotic mRNAs. Required during meiotic maturation to silence certain maternal mRNAs translationally. Does not require an adenosine residue at the 3' end, however, the addition of 25 non-adenylate residues at the 3' terminus, or a 3' terminal phosphate is inhibitory. Involved in dormant mRNAs regulation during oocyte maturation by counteracting polyadenylation mediated by papd4/gld2nt in immature eggs. During maturation it is excluded from the ribonucleoprotein complex, allowing poly(A) elongation by papd4/gld2nt and activation of mRNAs. This Xenopus laevis (African clawed frog) protein is Poly(A)-specific ribonuclease PARN (parn).